We begin with the raw amino-acid sequence, 3424 residues long: Genome polyprotein (3424 aa).

The segment at 2–15 (SKKPGKSAAKRTVN) is interaction with host EXOC1. Residues 2-101 (SKKPGKSAAK…SVNKRKEKKK (100 aa)) are Cytoplasmic-facing. Residues 35-70 (MLDVRGAPRLILALMAFFRFAAIKPTLGLKKRWRSV) are hydrophobic; homodimerization of capsid protein C. Residues 102 to 118 (SFSTALLWITMITAVAG) constitute a propeptide, ER anchor for the capsid protein C, removed in mature form by serine protease NS3. The helical transmembrane segment at 102 to 122 (SFSTALLWITMITAVAGLKIS) threads the bilayer. The Extracellular segment spans residues 123 to 244 (SHRDRPLLMV…TTKYLTKVEN (122 aa)). The N-linked (GlcNAc...) asparagine; by host glycan is linked to Asn133. Residues 245 to 265 (WVIRNPGYALVALATAWMLGS) form a helical membrane-spanning segment. Topologically, residues 266–270 (NTPQR) are cytoplasmic. The helical transmembrane segment at 271–285 (VVFMIMMMLIAPAYS) threads the bilayer. The Extracellular segment spans residues 286–738 (LNCLGISNRD…GVFGTAFRSL (453 aa)). Intrachain disulfides connect Cys288/Cys315, Cys345/Cys401, Cys345/Cys406, Cys359/Cys390, Cys377/Cys401, Cys377/Cys406, Cys475/Cys573, and Cys590/Cys621. The fusion peptide stretch occupies residues 383-396 (DRGWGNGCGLFGKG). Residues 739-759 (FGGMSWVTQALMGALLLWLGI) traverse the membrane as a helical segment. At 760–765 (SARERT) the chain is on the cytoplasmic side. Residues 766–786 (VSLIMLSVGGILLFLAVNVHA) traverse the membrane as a helical segment. Residues 787–1170 (DTGCAIDMAR…EVLRRRWTAN (384 aa)) are Extracellular-facing. Disulfide bonds link Cys790/Cys801, Cys841/Cys929, Cys965/Cys1009, Cys1067/Cys1116, Cys1078/Cys1099, Cys1078/Cys1100, Cys1099/Cys1103, and Cys1100/Cys1103. Residues Asn916 and Asn993 are each glycosylated (N-linked (GlcNAc...) asparagine; by host). The chain crosses the membrane as a helical span at residues 1171–1191 (LALPTSALLMACFIFGGFTYL). Residues 1192-1213 (DLFRYFILVGAAFAEANSGGDV) lie on the Cytoplasmic side of the membrane. Residues 1214 to 1234 (VHLAMIAAFNIQPVALVTTFF) traverse the membrane as a helical segment. The Lumenal segment spans residues 1235–1276 (RKNWTNRENMILIIAAACTQMACMELKIELFHVMNSLSLAWM). Residues 1277 to 1297 (ILKALTTGTTSTLAMPFLAAL) form a helical membrane-spanning segment. Residues 1298–1302 (SPPMN) are Cytoplasmic-facing. Residues 1303-1323 (WLGLDVVRCLLIMAGVAALIS) traverse the membrane as a helical segment. Residues 1324–1333 (ERRESLAKKK) are Lumenal-facing. Residues 1334-1354 (GALLISAALALTGAFSPLVLQ) form a helical membrane-spanning segment. Residues 1355-1367 (GALMFTQSLGKRG) lie on the Cytoplasmic side of the membrane. Residues 1368 to 1388 (WPASEVLTAVGMTFALAGSVA) form a helical membrane-spanning segment. At 1389–1391 (RLD) the chain is on the lumenal side. A helical transmembrane segment spans residues 1392–1412 (GGTMAIPLATMAILAVAYVLS). The Cytoplasmic segment spans residues 1413 to 1469 (GKSTDMWLERCADISWINEAEITGTSPRLDVELDSNGDFKMINDPGVPMWMWTCRMG). The tract at residues 1420–1459 (LERCADISWINEAEITGTSPRLDVELDSNGDFKMINDPGV) is interacts with and activates NS3 protease. Positions 1470 to 1490 (LMAMAAYNPVLIPVSMAGYWM) form an intramembrane region, helical. Topologically, residues 1491 to 2167 (TVKIHKRGGV…ALEELPDTVE (677 aa)) are cytoplasmic. A Peptidase S7 domain is found at 1498 to 1675 (GGVMWDVPAP…ERQEEETPEA (178 aa)). Residues His1548, Asp1572, and Ser1632 each act as charge relay system; for serine protease NS3 activity in the active site. One can recognise a Helicase ATP-binding domain in the interval 1678–1834 (PDMLKKRRLT…DSNAPIIDQE (157 aa)). The segment at 1682-1685 (KKRR) is important for RNA-binding. Residue 1691-1698 (LHPGAGKT) coordinates ATP. Residues 1782 to 1785 (DEAH) carry the DEAH box motif. The Helicase C-terminal domain maps to 1845 to 2009 (GFEWITEYTG…GLVAQLYGPE (165 aa)). The residue at position 1886 (Lys1886) is an N6-acetyllysine; by host. Positions 1944-1969 (APITPASAAQRRGRIGRDPTQSGDEY) are disordered. The interval 2160–2164 (EELPD) is regulates the ATPase activity of NS3 helicase. A helical transmembrane segment spans residues 2168-2188 (TILLMTMMCVASLGMFTLMVH). The Lumenal portion of the chain corresponds to 2189–2190 (RR). The helical intramembrane region spans 2191–2211 (GLGKTGLGTLVLATVTVLLWI). At 2212-2213 (SD) the chain is on the lumenal side. The chain crosses the membrane as a helical span at residues 2214–2234 (VPAPKIAGVLLIAFLLMIVLI). The Cytoplasmic portion of the chain corresponds to 2235–2249 (PEPEKQRSQTDNHLA). A helical membrane pass occupies residues 2250–2264 (IFLVCVLLLIGAVSA). At 2265 to 2299 (NEMGWLETTKKDIGKLFRSSGDTQEQSTWQSWAPE) the chain is on the lumenal side. The segment at residues 2300 to 2320 (VRAATAWAGYAGLTVFLTPLF) is an intramembrane region (helical). Residues 2321–2342 (RHLITTQYVSFSLTAITAQASA) are Lumenal-facing. The chain crosses the membrane as a helical span at residues 2343–2363 (LFGLSAGYPFVGIDLAVGFLL). Topologically, residues 2364 to 2371 (LGCYGQYN) are cytoplasmic. The chain crosses the membrane as a helical span at residues 2372-2392 (LPTAVATGLLLLAHYGYMIPG). The Lumenal portion of the chain corresponds to 2393-2439 (WQAEAMRAAQKRTAAGVMKNAVVDGIVATDIPEVDTATPITEKKLGQ). Residues 2440-2460 (ILLILLCGASLLVKFDTMVLV) form a helical membrane-spanning segment. The Cytoplasmic portion of the chain corresponds to 2461-3424 (EAGVLTTSAM…PSPVLFTGAI (964 aa)). Residues 2520–2784 (GGGSAPTLGE…DVCLGSGTRA (265 aa)) enclose the mRNA cap 0-1 NS5-type MT domain. Position 2575 (Ser2575) interacts with S-adenosyl-L-methionine. A Phosphoserine modification is found at Ser2575. The For 2'-O-MTase activity role is filled by Lys2580. S-adenosyl-L-methionine is bound by residues Gly2605, Trp2606, Thr2623, Lys2624, Asp2650, and Val2651. Asp2665 serves as the catalytic For 2'-O-MTase activity. Ile2666 provides a ligand contact to S-adenosyl-L-methionine. Active-site for 2'-O-MTase activity residues include Lys2700 and Glu2736. Tyr2738 lines the S-adenosyl-L-methionine pocket. Residues Glu2958, His2962, Cys2967, and Cys2970 each coordinate Zn(2+). The RdRp catalytic domain occupies 3048–3200 (GNMFADDTAG…KPIDDRFASA (153 aa)). 3 residues coordinate Zn(2+): His3235, Cys3251, and Cys3370.

This sequence in the N-terminal section; belongs to the class I-like SAM-binding methyltransferase superfamily. mRNA cap 0-1 NS5-type methyltransferase family. Homodimer. Interacts (via N-terminus) with host EXOC1 (via C-terminus); this interaction results in EXOC1 degradation through the proteasome degradation pathway. As to quaternary structure, forms heterodimers with envelope protein E in the endoplasmic reticulum and Golgi. In terms of assembly, homodimer; in the endoplasmic reticulum and Golgi. Interacts with protein prM. Interacts with non-structural protein 1. Homodimer; Homohexamer when secreted. Interacts with envelope protein E. NS1 interacts with NS4B. Interacts with host complement protein CFH; this interaction leads to the degradation of C3. As to quaternary structure, interacts (via N-terminus) with serine protease NS3. In terms of assembly, forms a heterodimer with serine protease NS3. May form homooligomers. Forms a heterodimer with NS2B. Interacts with non-structural protein 2A (via N-terminus). Interacts with NS4B. Interacts with unphosphorylated RNA-directed RNA polymerase NS5; this interaction stimulates RNA-directed RNA polymerase NS5 guanylyltransferase activity. As to quaternary structure, interacts with serine protease NS3. In terms of assembly, homodimer. Interacts with host STAT2; this interaction inhibits the phosphorylation of the latter, and, when all viral proteins are present (polyprotein), targets STAT2 for degradation. Interacts with serine protease NS3. In terms of processing, specific enzymatic cleavages in vivo yield mature proteins. Cleavages in the lumen of endoplasmic reticulum are performed by host signal peptidase, whereas cleavages in the cytoplasmic side are performed by serine protease NS3. Signal cleavage at the 2K-4B site requires a prior NS3 protease-mediated cleavage at the 4A-2K site. Post-translationally, cleaved in post-Golgi vesicles by a host furin, releasing the mature small envelope protein M, and peptide pr. This cleavage is incomplete as up to 30% of viral particles still carry uncleaved prM. N-glycosylated. In terms of processing, N-glycosylated. The excreted form is glycosylated and this is required for efficient secretion of the protein from infected cells. Post-translationally, acetylated by host KAT5. Acetylation modulates NS3 RNA-binding and unwinding activities and plays an important positive role for viral replication. Phosphorylated on serines residues. This phosphorylation may trigger NS5 nuclear localization.

Its subcellular location is the virion. It localises to the host nucleus. It is found in the host cytoplasm. The protein resides in the host perinuclear region. The protein localises to the secreted. Its subcellular location is the virion membrane. It localises to the host endoplasmic reticulum membrane. It catalyses the reaction Selective hydrolysis of -Xaa-Xaa-|-Yaa- bonds in which each of the Xaa can be either Arg or Lys and Yaa can be either Ser or Ala.. The catalysed reaction is RNA(n) + a ribonucleoside 5'-triphosphate = RNA(n+1) + diphosphate. The enzyme catalyses a ribonucleoside 5'-triphosphate + H2O = a ribonucleoside 5'-diphosphate + phosphate + H(+). It carries out the reaction ATP + H2O = ADP + phosphate + H(+). It catalyses the reaction a 5'-end (5'-triphosphoguanosine)-ribonucleoside in mRNA + S-adenosyl-L-methionine = a 5'-end (N(7)-methyl 5'-triphosphoguanosine)-ribonucleoside in mRNA + S-adenosyl-L-homocysteine. The catalysed reaction is a 5'-end (N(7)-methyl 5'-triphosphoguanosine)-ribonucleoside in mRNA + S-adenosyl-L-methionine = a 5'-end (N(7)-methyl 5'-triphosphoguanosine)-(2'-O-methyl-ribonucleoside) in mRNA + S-adenosyl-L-homocysteine + H(+). Its function is as follows. Plays a role in virus budding by binding to the cell membrane and gathering the viral RNA into a nucleocapsid that forms the core of a mature virus particle. During virus entry, may induce genome penetration into the host cytoplasm after hemifusion induced by the surface proteins. Can migrate to the cell nucleus where it modulates host functions. Overcomes the anti-viral effects of host EXOC1 by sequestering and degrading the latter through the proteasome degradation pathway. Functionally, inhibits RNA silencing by interfering with host Dicer. In terms of biological role, prevents premature fusion activity of envelope proteins in trans-Golgi by binding to envelope protein E at pH6.0. After virion release in extracellular space, gets dissociated from E dimers. Acts as a chaperone for envelope protein E during intracellular virion assembly by masking and inactivating envelope protein E fusion peptide. prM is the only viral peptide matured by host furin in the trans-Golgi network probably to avoid catastrophic activation of the viral fusion activity in acidic Golgi compartment prior to virion release. prM-E cleavage is inefficient, and many virions are only partially matured. These uncleaved prM would play a role in immune evasion. Its function is as follows. May play a role in virus budding. Exerts cytotoxic effects by activating a mitochondrial apoptotic pathway through M ectodomain. May display a viroporin activity. Functionally, binds to host cell surface receptor and mediates fusion between viral and cellular membranes. Envelope protein is synthesized in the endoplasmic reticulum in the form of heterodimer with protein prM. They play a role in virion budding in the ER, and the newly formed immature particle is covered with 60 spikes composed of heterodimer between precursor prM and envelope protein E. The virion is transported to the Golgi apparatus where the low pH causes dissociation of PrM-E heterodimers and formation of E homodimers. prM-E cleavage is inefficient, and many virions are only partially matured. These uncleaved prM would play a role in immune evasion. In terms of biological role, involved in immune evasion, pathogenesis and viral replication. Once cleaved off the polyprotein, is targeted to three destinations: the viral replication cycle, the plasma membrane and the extracellular compartment. Essential for viral replication. Required for formation of the replication complex and recruitment of other non-structural proteins to the ER-derived membrane structures. Excreted as a hexameric lipoparticle that plays a role against host immune response. Antagonizing the complement function. Binds to the host macrophages and dendritic cells. Inhibits signal transduction originating from Toll-like receptor 3 (TLR3). Component of the viral RNA replication complex that functions in virion assembly and antagonizes the host alpha/beta interferon antiviral response. Its function is as follows. Required cofactor for the serine protease function of NS3. May have membrane-destabilizing activity and form viroporins. Functionally, displays three enzymatic activities: serine protease, NTPase and RNA helicase. NS3 serine protease, in association with NS2B, performs its autocleavage and cleaves the polyprotein at dibasic sites in the cytoplasm: C-prM, NS2A-NS2B, NS2B-NS3, NS3-NS4A, NS4A-2K and NS4B-NS5. NS3 RNA helicase binds RNA and unwinds dsRNA in the 3' to 5' direction. In terms of biological role, regulates the ATPase activity of the NS3 helicase activity. NS4A allows NS3 helicase to conserve energy during unwinding. Functions as a signal peptide for NS4B and is required for the interferon antagonism activity of the latter. Its function is as follows. Induces the formation of ER-derived membrane vesicles where the viral replication takes place. Inhibits interferon (IFN)-induced host STAT1 phosphorylation and nuclear translocation, thereby preventing the establishment of cellular antiviral state by blocking the IFN-alpha/beta pathway. Inhibits STAT2 translocation in the nucleus after IFN-alpha treatment. Functionally, replicates the viral (+) and (-) RNA genome, and performs the capping of genomes in the cytoplasm. NS5 methylates viral RNA cap at guanine N-7 and ribose 2'-O positions. Besides its role in RNA genome replication, also prevents the establishment of cellular antiviral state by blocking the interferon-alpha/beta (IFN-alpha/beta) signaling pathway. Inhibits host TYK2 and STAT2 phosphorylation, thereby preventing activation of JAK-STAT signaling pathway. The protein is Genome polyprotein of Aedes sp. (Human).